The chain runs to 368 residues: Probable multidrug ABC transporter permease YbhR (368 aa).

Residues 1-24 (MFHRLWTLIRKELQSLLREPQTRA) are Cytoplasmic-facing. Residues 25-45 (ILILPVLIQVILFPFAATLEV) form a helical membrane-spanning segment. Residues 46–173 (TNATIAIYDE…WYNPNLDYKW (128 aa)) lie on the Periplasmic side of the membrane. The ABC transmembrane type-2 domain occupies 129–366 (AQIAANYLQQ…SAAYAMFRRK (238 aa)). A helical transmembrane segment spans residues 174–194 (FVVPSLIAMITTIGVMIVTSL). Over 195-222 (SVAREREQGTLDQLLVSPLTTWQIFIGK) the chain is Cytoplasmic. Residues 223-243 (AVPALIVATFQATIVLAIGIW) traverse the membrane as a helical segment. Over 244 to 253 (AYQIPFAGSL) the chain is Periplasmic. The chain crosses the membrane as a helical span at residues 254 to 274 (ALFYFTMVIYGLSLVGFGLLI). Residues 275–284 (SSLCSTQQQA) are Cytoplasmic-facing. A helical membrane pass occupies residues 285-305 (FIGVFVFMMPAILLSGYVSPV). The Periplasmic portion of the chain corresponds to 306–339 (ENMPVWLQNLTWINPIRHFTDITKQIYLKDASLD). Residues 340 to 360 (IVWNSLWPLLVITATTGSAAY) traverse the membrane as a helical segment. Residues 361 to 368 (AMFRRKVM) lie on the Cytoplasmic side of the membrane.

This sequence belongs to the ABC-2 integral membrane protein family. In terms of assembly, the complex is probably composed of two ATP-binding proteins (YbhF) and two transmembrane proteins (YbhR and YbhS).

It is found in the cell inner membrane. Its function is as follows. Part of the ABC transporter complex YbhFSR that could be involved in efflux of cefoperazone. Probably involved in the translocation of the substrate across the membrane. In Escherichia coli O157:H7, this protein is Probable multidrug ABC transporter permease YbhR (ybhR).